The sequence spans 221 residues: Protein-L-isoaspartate O-methyltransferase (221 aa).

Residue S70 is part of the active site.

Belongs to the methyltransferase superfamily. L-isoaspartyl/D-aspartyl protein methyltransferase family.

Its subcellular location is the cytoplasm. It carries out the reaction [protein]-L-isoaspartate + S-adenosyl-L-methionine = [protein]-L-isoaspartate alpha-methyl ester + S-adenosyl-L-homocysteine. Functionally, catalyzes the methyl esterification of L-isoaspartyl residues in peptides and proteins that result from spontaneous decomposition of normal L-aspartyl and L-asparaginyl residues. It plays a role in the repair and/or degradation of damaged proteins. This chain is Protein-L-isoaspartate O-methyltransferase, found in Alkalilimnicola ehrlichii (strain ATCC BAA-1101 / DSM 17681 / MLHE-1).